Here is a 107-residue protein sequence, read N- to C-terminus: Putative double-stranded DNA mimic protein Spro_2690 (107 aa).

Belongs to the putative dsDNA mimic protein family.

Its function is as follows. May act as a double-stranded DNA (dsDNA) mimic. Probably regulates the activity of a dsDNA-binding protein. In Serratia proteamaculans (strain 568), this protein is Putative double-stranded DNA mimic protein Spro_2690.